The sequence spans 1090 residues: Neurofilament heavy polypeptide (1090 aa).

The head stretch occupies residues 2–98; the sequence is MSFGSADALL…AVAARSEKEQ (97 aa). 2 positions are modified to phosphoserine: Ser74 and Ser122. Positions 95-411 constitute an IF rod domain; the sequence is EKEQLQALND…KLLEGEECRI (317 aa). The segment at 99-130 is coil 1A; it reads LQALNDRFAGYIDKVRQLEAHNRSLEGEAAAL. Positions 131–143 are linker 1; the sequence is RQQQAGRAAMGEL. Positions 144-242 are coil 1B; that stretch reads YEREVREMRG…QEEVGELLGQ (99 aa). Residues 243–264 form a linker 12 region; that stretch reads IQGCGAAQAQAQAEARDALKCD. The tract at residues 265 to 286 is coil 2A; that stretch reads VTSALREIRAQLEGHAVQSTLQ. The segment at 287 to 290 is linker 2; it reads SEEW. The interval 291-411 is coil 2B; that stretch reads FRVRLDRLSE…KLLEGEECRI (121 aa). A phosphoserine mark is found at Ser345, Ser416, and Ser419. The interval 412 to 1090 is tail; sequence GFGPSPFSLT…TEDKATKGEK (679 aa). The segment at 456-1090 is disordered; that stretch reads EGQTEEIRVT…TEDKATKGEK (635 aa). Acidic residues predominate over residues 468–495; sequence VTEEEDKEAQGQEGEEAEEGEEKEEEEG. Residues 496-506 show a composition bias toward low complexity; the sequence is AAATSPPAEEA. Ser508, Ser523, Ser529, Ser535, Ser541, Ser547, Ser553, Ser559, Ser565, Ser571, Ser577, Ser583, Ser589, Ser595, Ser601, Ser607, Ser613, Ser619, Ser625, Ser631, Ser637, Ser643, Ser649, Ser655, Ser661, Ser667, Ser673, Ser679, Ser685, Ser691, Ser697, Ser703, Ser709, Ser715, Ser721, Ser727, Ser733, Ser739, Ser745, Ser751, Ser757, Ser763, and Ser769 each carry phosphoserine. Basic and acidic residues predominate over residues 508 to 579; sequence SPEKETKSRV…KSPAEAKSPA (72 aa). Repeat copies occupy residues 522–527, 528–533, 534–539, 540–545, 546–551, 552–557, 558–563, 564–569, 570–575, 576–581, 582–587, 588–593, 594–599, 600–605, 606–611, 612–617, 618–623, 624–629, 630–635, 636–641, 642–647, 648–653, 654–659, 660–665, 666–671, 672–677, 678–683, 684–689, 690–695, 696–701, 702–707, 708–713, 714–719, 720–725, 726–731, 732–737, 738–743, 744–749, 750–755, 756–761, 762–767, and 768–773. A 52 X 6 AA approximate tandem repeats of K-S-P-[AGISV]-[EATK]-[APVQ] region spans residues 522 to 892; sequence KSPGEAKSPG…KEEVKSPVKE (371 aa). Basic and acidic residues predominate over residues 595–633; that stretch reads SPSEAKSPAEAKSPAEAKSPAEAKSPAEAKSPAEAKSPA. Residues 649–717 are compositionally biased toward basic and acidic residues; the sequence is SPSEAKSPAE…KSPAEVKSPG (69 aa). The segment covering 745-781 has biased composition (basic and acidic residues); the sequence is SPGEAKSPAEAKSPAEAKSPIEVKSPEKAKTPVKEGA. The 43; approximate repeat unit spans residues 774 to 779; the sequence is KTPVKE. 6 consecutive repeat copies span residues 782 to 787, 788 to 793, 794 to 799, 808 to 813, 814 to 819, and 833 to 838. Phosphoserine occurs at positions 783, 789, 795, 809, 815, and 834. Basic and acidic residues predominate over residues 788–834; sequence KSPEKAKSPVKEDIKPPAEAKSPEKAKSPVKEGAKPPEKAKPLDVKS. Thr839 carries the post-translational modification Phosphothreonine. 2 stretches are compositionally biased toward basic and acidic residues: residues 843–964 and 974–1090; these read EEAK…KAVA and GVKE…KGEK. 3 repeat units span residues 858-863, 866-871, and 887-892. Residues Ser859, Ser867, Ser888, and Ser947 each carry the phosphoserine modification.

It belongs to the intermediate filament family. As to quaternary structure, forms heterodimers with NEFL; which can further hetero-oligomerize (in vitro). Forms heterodimers with INA (in vitro). There are a number of repeats of the tripeptide K-S-P, NFH is phosphorylated on a number of the serines in this motif. It is thought that phosphorylation of NFH results in the formation of interfilament cross bridges that are important in the maintenance of axonal caliber. Post-translationally, phosphorylation seems to play a major role in the functioning of the larger neurofilament polypeptides (NF-M and NF-H), the levels of phosphorylation being altered developmentally and coincidentally with a change in the neurofilament function. In terms of processing, phosphorylated in the head and rod regions by the PKC kinase PKN1, leading to the inhibition of polymerization. In terms of tissue distribution, expressed in the sciatic nerve (at protein level).

Its subcellular location is the cytoplasm. It localises to the cytoskeleton. The protein localises to the cell projection. It is found in the axon. Its function is as follows. Neurofilaments usually contain three intermediate filament proteins: NEFL, NEFM, and NEFH which are involved in the maintenance of neuronal caliber. NEFH has an important function in mature axons that is not subserved by the two smaller NF proteins. May additionally cooperate with the neuronal intermediate filament proteins PRPH and INA to form neuronal filamentous networks. This is Neurofilament heavy polypeptide (Nefh) from Mus musculus (Mouse).